The sequence spans 241 residues: Probable transcriptional regulatory protein lin1570 (241 aa).

Over residues 1–14 the composition is skewed to polar residues; the sequence is MAGHSKWNNIQGRK. A disordered region spans residues 1 to 22; the sequence is MAGHSKWNNIQGRKNAQDSKRS.

The protein belongs to the TACO1 family.

The protein resides in the cytoplasm. This is Probable transcriptional regulatory protein lin1570 from Listeria innocua serovar 6a (strain ATCC BAA-680 / CLIP 11262).